Here is an 827-residue protein sequence, read N- to C-terminus: Leucine--tRNA ligase (827 aa).

The short motif at 46 to 56 is the 'HIGH' region element; sequence PYPSGRIHMGH. The short motif at 585–589 is the 'KMSKS' region element; it reads KMSKS. Lys-588 serves as a coordination point for ATP.

This sequence belongs to the class-I aminoacyl-tRNA synthetase family.

The protein localises to the cytoplasm. It catalyses the reaction tRNA(Leu) + L-leucine + ATP = L-leucyl-tRNA(Leu) + AMP + diphosphate. The sequence is that of Leucine--tRNA ligase from Desulfotalea psychrophila (strain LSv54 / DSM 12343).